A 252-amino-acid chain; its full sequence is MNHFAKRIIPCLDVKDGRVVKGVNFVGLIDAGDPVEVAKRYNEEGADELAFLDITATHLGQETMVETIARVAKELFIPLTVGGGIRTLDDISRLLNVGCDKVSLNSAAIHNPNLIDEAANKFGSQCVVVAIDAKKFDATHHVFINGGRIDTGKDALAWAKEVQERGAGEILLTSMDKDGTKDGYDITLTNAISKALNIPVIASGGAGTMEHIKDAFLNGADACLAASIFHFRQIEIRALKRYLKENGIEVRL.

Catalysis depends on residues D13 and D132.

It belongs to the HisA/HisF family. As to quaternary structure, heterodimer of HisH and HisF.

It is found in the cytoplasm. The enzyme catalyses 5-[(5-phospho-1-deoxy-D-ribulos-1-ylimino)methylamino]-1-(5-phospho-beta-D-ribosyl)imidazole-4-carboxamide + L-glutamine = D-erythro-1-(imidazol-4-yl)glycerol 3-phosphate + 5-amino-1-(5-phospho-beta-D-ribosyl)imidazole-4-carboxamide + L-glutamate + H(+). The protein operates within amino-acid biosynthesis; L-histidine biosynthesis; L-histidine from 5-phospho-alpha-D-ribose 1-diphosphate: step 5/9. IGPS catalyzes the conversion of PRFAR and glutamine to IGP, AICAR and glutamate. The HisF subunit catalyzes the cyclization activity that produces IGP and AICAR from PRFAR using the ammonia provided by the HisH subunit. This chain is Imidazole glycerol phosphate synthase subunit HisF, found in Campylobacter curvus (strain 525.92).